The primary structure comprises 564 residues: Septation ring formation regulator EzrA (564 aa).

At 1–4 the chain is on the extracellular side; the sequence is MVLY. A helical transmembrane segment spans residues 5-23; it reads IILAIIVIILIAVGVLFYL. At 24-564 the chain is on the cytoplasmic side; it reads RSNKRQIIEK…KHIEEEVIKQ (541 aa). Coiled coils occupy residues 99–138, 190–223, 271–300, 350–435, and 471–550; these read SFNASQSEIDDANELMDSYEQSYQQQLEDVNEIIALYKDN, DGNYVQAHNHIAALNEQMKQLRSYMEEIPELIRE, LISRLELEEANDKLANINDKLDDMYDLIEH, VRQF…RRLL, and VKQL…ESVE.

Belongs to the EzrA family.

Its subcellular location is the cell membrane. Negative regulator of FtsZ ring formation; modulates the frequency and position of FtsZ ring formation. Inhibits FtsZ ring formation at polar sites. Interacts either with FtsZ or with one of its binding partners to promote depolymerization. This Staphylococcus aureus (strain NCTC 8325 / PS 47) protein is Septation ring formation regulator EzrA.